The chain runs to 915 residues: Mitogen-activated protein kinase kinae kinase MST11 (915 aa).

Disordered regions lie at residues 1–65 (MAML…PKHW), 134–171 (KKRN…NPSV), and 183–249 (GMAY…TRTD). Low complexity predominate over residues 26 to 45 (AQASYPPSRRAPAVPPASQS). One can recognise an SAM domain in the interval 65–128 (WDEDKVCEYL…FLSIKKLRTK (64 aa)). Low complexity-rich tracts occupy residues 152 to 163 (SESPSKPFHSSS) and 188 to 203 (PSRP…PLPS). The Ras-associating domain maps to 263-353 (NQDVIRVIST…NRLILRRVPA (91 aa)). Residues 641 to 911 (WMKGALIGQG…ADDLMLSPFL (271 aa)) enclose the Protein kinase domain. ATP contacts are provided by residues 647-655 (IGQGSFGCV) and K670.

This sequence belongs to the protein kinase superfamily. STE Ser/Thr protein kinase family. MAP kinase kinase kinase subfamily. Interacts with the adapter protein MST50.

It carries out the reaction L-seryl-[protein] + ATP = O-phospho-L-seryl-[protein] + ADP + H(+). The enzyme catalyses L-threonyl-[protein] + ATP = O-phospho-L-threonyl-[protein] + ADP + H(+). Its function is as follows. Mitogen-activated protein kinase kinase kinase; part of the MST11-MST7-PMK1 MAP kinase (MAPK) cascade that is essential for appressorium formation, penetration and invasive growth. The MST11-MST7-PMK1 MAP kinase cascade transduces signals from the cell surface sensors MDB2 and SHO1 that recognize various surface signals such as surface hydrophobicity, cutin monomers, and rice leaf waxes. MST11 acts as the upstream MAPKKK that directly phosphorylates MAPKK MST7. MST11 but not MST7 may also be involved in the OSM1 MAPK pathway in response to osmotic stresses. This is Mitogen-activated protein kinase kinae kinase MST11 from Pyricularia oryzae (strain 70-15 / ATCC MYA-4617 / FGSC 8958) (Rice blast fungus).